Consider the following 415-residue polypeptide: Putative O-antigen transporter (415 aa).

Over 1 to 11 the chain is Cytoplasmic; it reads MNTNKLSLRRN. Residues 12–32 form a helical membrane-spanning segment; the sequence is VIYLAVVQGSNYLLPLLTFPY. At 33–41 the chain is on the periplasmic side; the sequence is LVRTLGPEN. The helical transmembrane segment at 42-62 threads the bilayer; sequence FGIFGFCQATMLYMIMFVEYG. Residues 63–83 are Cytoplasmic-facing; it reads FNLTATQSIAKAADSKDKVTS. Residues 84 to 104 traverse the membrane as a helical segment; sequence IFWAVIFSKIVLIVITLIFLT. At 105–117 the chain is on the periplasmic side; sequence SMTLLVPEYNKHA. The chain crosses the membrane as a helical span at residues 118–138; sequence VIIWSFVPALVGNLIYPIWLF. At 139–173 the chain is on the cytoplasmic side; the sequence is QGKEKMKWLTLSSILSRLAIIPLTFIFVNTKSDIA. A helical transmembrane segment spans residues 174-194; that stretch reads IAGFIQSSANLVAGIIALAIV. The Periplasmic portion of the chain corresponds to 195 to 220; the sequence is VHEGWIGKVTLSLHNVRRSLADGFHV. A helical membrane pass occupies residues 221–241; that stretch reads FISTSAISLYSTGIVIILGFI. The Cytoplasmic portion of the chain corresponds to 242–295; that stretch reads SGPTSVGNFNAANTIRNALQGLLNPITQAIYPRISSTLVLNRVKGVILIKKSLT. Residues 296 to 316 form a helical membrane-spanning segment; it reads CLSLIGGAFSLILLLGASILV. Residues 317 to 328 lie on the Periplasmic side of the membrane; sequence KISIGPGYDNAV. The helical transmembrane segment at 329-349 threads the bilayer; it reads IVLMIISPLPFLISLSNVYGI. Topologically, residues 350–362 are cytoplasmic; that stretch reads QVMLTHNYKKEFS. Residues 363 to 383 traverse the membrane as a helical segment; that stretch reads KILIAAGLLSLLLIFPLTTLF. Over 384–385 the chain is Periplasmic; sequence KE. The chain crosses the membrane as a helical span at residues 386 to 406; sequence IGAAITLLATECLVTSLMLMF. At 407–415 the chain is on the cytoplasmic side; the sequence is VRNNKLLVC.

Belongs to the polysaccharide synthase family.

The protein localises to the cell inner membrane. It participates in bacterial outer membrane biogenesis; LPS O-antigen biosynthesis. May be involved in the translocation process of the nascent O-polysaccharide molecules and/or its ligation to lipid A core units. The chain is Putative O-antigen transporter (rfbX) from Escherichia coli (strain K12).